A 620-amino-acid chain; its full sequence is Chaperone protein HscA homolog (620 aa).

This sequence belongs to the heat shock protein 70 family.

In terms of biological role, chaperone involved in the maturation of iron-sulfur cluster-containing proteins. Has a low intrinsic ATPase activity which is markedly stimulated by HscB. The chain is Chaperone protein HscA homolog from Bordetella pertussis (strain Tohama I / ATCC BAA-589 / NCTC 13251).